The following is a 1166-amino-acid chain: Poly [ADP-ribose] polymerase tankyrase-2 (1166 aa).

ANK repeat units lie at residues Arg57–Asp89, Gly90–Asn122, and Trp123–Thr155. (3S)-3-hydroxyasparagine; by HIF1AN; partial is present on Asn203. ANK repeat units follow at residues Arg210 to Lys242, Gly243 to Leu275, Trp276 to Cys308, Thr363 to Lys398, Glu399 to Asn431, and Leu432 to Leu464. At His238 the chain carries (3S)-3-hydroxyhistidine; by HIF1AN; partial. Asn271 carries the post-translational modification (3S)-3-hydroxyasparagine; by HIF1AN; partial. Asn427 is subject to (3S)-3-hydroxyasparagine; by HIF1AN; partial. Asn518 carries the (3S)-3-hydroxyasparagine; by HIF1AN; partial modification. ANK repeat units lie at residues Arg525–Lys557, Gly558–Leu590, and Trp591–Arg623. The segment at Leu545–His553 is HIF1AN-binding. (3S)-3-hydroxyhistidine; by HIF1AN; partial is present on His553. Position 586 is a (3S)-3-hydroxyasparagine; by HIF1AN; partial (Asn586). (3S)-3-hydroxyasparagine; by HIF1AN; partial occurs at positions 671, 706, and 739. ANK repeat units lie at residues Arg678–Lys710, Gly711–Lys743, and Trp744–Gln776. Residues Gly819–Ser839 form a disordered region. A compositionally biased stretch (low complexity) spans Ala822–Ser839. The SAM domain maps to Gly873–Gly936. The region spanning Ser959–Val1164 is the PARP catalytic domain. The Zn(2+) site is built by Cys1081, His1084, Cys1089, and Cys1092.

It belongs to the ARTD/PARP family. Oligomerizes and associates with TNKS. Interacts with the cytoplasmic domain of LNPEP/Otase in SLC2A4/GLUT4-vesicles. Binds to the N-terminus of Grb14 and TRF1 with its ankyrin repeat region. Interacts with HIF1AN. Interacts with RNF146; this interaction leads to ubiquitination and proteasomal degradation. Interacts with NUMA1. Ubiquitinated at 'Lys-48' and 'Lys-63' by RNF146 when auto-poly-ADP-ribosylated; this leads to degradation. Deubiquitinated by USP25; leading to stabilization. Post-translationally, ADP-ribosylated (-auto). Poly-ADP-ribosylated protein is recognized by RNF146, followed by ubiquitination. In terms of processing, the crystallographic evidence suggests that the 3-hydroxyhistidine may be the (3S) stereoisomer. In terms of tissue distribution, highly expressed in placenta, skeletal muscle, liver, brain, kidney, heart, thymus, spinal cord, lung, peripheral blood leukocytes, pancreas, lymph nodes, spleen, prostate, testis, ovary, small intestine, colon, mammary gland, breast and breast carcinoma, and in common-type meningioma. Highly expressed in fetal liver, heart and brain.

The protein localises to the cytoplasm. It is found in the golgi apparatus membrane. The protein resides in the nucleus. Its subcellular location is the chromosome. It localises to the telomere. The catalysed reaction is NAD(+) + (ADP-D-ribosyl)n-acceptor = nicotinamide + (ADP-D-ribosyl)n+1-acceptor + H(+).. The enzyme catalyses L-aspartyl-[protein] + NAD(+) = 4-O-(ADP-D-ribosyl)-L-aspartyl-[protein] + nicotinamide. It catalyses the reaction L-glutamyl-[protein] + NAD(+) = 5-O-(ADP-D-ribosyl)-L-glutamyl-[protein] + nicotinamide. Its activity is regulated as follows. Specifically inhibited by XAV939, a small molecule, leading to inhibit the Wnt signaling pathway by stabilizing AXIN1 and AXIN2. Inhibited by talazoparib. Poly-ADP-ribosyltransferase involved in various processes such as Wnt signaling pathway, telomere length and vesicle trafficking. Acts as an activator of the Wnt signaling pathway by mediating poly-ADP-ribosylation of AXIN1 and AXIN2, 2 key components of the beta-catenin destruction complex: poly-ADP-ribosylated target proteins are recognized by RNF146, which mediates their ubiquitination and subsequent degradation. Also mediates poly-ADP-ribosylation of BLZF1 and CASC3, followed by recruitment of RNF146 and subsequent ubiquitination. Mediates poly-ADP-ribosylation of TERF1, thereby contributing to the regulation of telomere length. Stimulates 26S proteasome activity. The polypeptide is Poly [ADP-ribose] polymerase tankyrase-2 (Homo sapiens (Human)).